The chain runs to 497 residues: Protein root UVB sensitive 6 (497 aa).

The protein belongs to the RUS1 family.

Functionally, required for normal embryo development. This is Protein root UVB sensitive 6 from Arabidopsis thaliana (Mouse-ear cress).